The chain runs to 217 residues: Replication-associated protein A (217 aa).

A compositionally biased stretch (low complexity) spans 1–17 (MRAPASSAASNRPGPSN). The segment at 1-22 (MRAPASSAASNRPGPSNHPTPR) is disordered. A CRESS-DNA virus Rep endonuclease domain is found at 22–125 (RWNSKQFFLT…NGDSDEMGEL (104 aa)). The RCR-1 motif lies at 29–32 (FLTY). A divalent metal cation-binding residues include Glu-63, His-71, and His-73. The RCR-2 motif lies at 71 to 73 (HLH). Tyr-111 functions as the For DNA cleavage activity in the catalytic mechanism. Residues 111 to 114 (YISK) carry the RCR-3 motif. The oligomerization stretch occupies residues 176–188 (SAAALFTEPPPVY).

Belongs to the geminiviridae Rep protein family. Homooligomer. Part of the C- and V-complexes which are RepA-Rep-DNA complexes involved in the c-sense and v-sense transcription.

It is found in the host nucleus. The protein resides in the host cytoplasm. In terms of biological role, implicated in enhancement of V-sense gene expression. Acts a an inhibitor of C-sense gene transcription. This chain is Replication-associated protein A, found in Miscanthus sacchariflorus (MiSV).